Reading from the N-terminus, the 130-residue chain is Large ribosomal subunit protein bL17 (130 aa).

Belongs to the bacterial ribosomal protein bL17 family. In terms of assembly, part of the 50S ribosomal subunit. Contacts protein L32.

The polypeptide is Large ribosomal subunit protein bL17 (Buchnera aphidicola subsp. Acyrthosiphon pisum (strain APS) (Acyrthosiphon pisum symbiotic bacterium)).